A 165-amino-acid polypeptide reads, in one-letter code: Regulator of sigma D (165 aa).

This sequence belongs to the Rsd/AlgQ family. Interacts with RpoD.

It localises to the cytoplasm. Functionally, binds RpoD and negatively regulates RpoD-mediated transcription activation by preventing the interaction between the primary sigma factor RpoD with the catalytic core of the RNA polymerase and with promoter DNA. May be involved in replacement of the RNA polymerase sigma subunit from RpoD to RpoS during the transition from exponential growth to the stationary phase. This Enterobacter sp. (strain 638) protein is Regulator of sigma D.